Reading from the N-terminus, the 232-residue chain is LRRN4 C-terminal-like protein (232 aa).

Positions methionine 1–proline 22 are cleaved as a signal peptide. Topologically, residues leucine 23–threonine 189 are extracellular. The Fibronectin type-III domain maps to proline 77–glycine 172. A glycan (N-linked (GlcNAc...) asparagine) is linked at asparagine 127. Residues leucine 190 to valine 210 traverse the membrane as a helical segment. At tryptophan 211–leucine 232 the chain is on the cytoplasmic side.

The protein localises to the membrane. The polypeptide is LRRN4 C-terminal-like protein (LRRN4CL) (Bos taurus (Bovine)).